We begin with the raw amino-acid sequence, 437 residues long: Protein WVD2-like 5 (437 aa).

Disordered stretches follow at residues 1 to 22 (MDPE…GGLA), 38 to 210 (TVDT…FSFK), and 254 to 437 (LRKS…AVEH). Residues 41 to 55 (TTSESQNENSANSST) are compositionally biased toward low complexity. Residues 58–86 (TIEHVKEAAEGTQVEHVDDSKCMKGEKAQ) show a composition bias toward basic and acidic residues. Residues 121–140 (SNGSVAPNVQTTNPLKSKSF) show a composition bias toward polar residues. Over residues 151 to 167 (GKHDSAPAESADGEKVK) the composition is skewed to basic and acidic residues. S208 carries the phosphoserine modification. Positions 288–297 (KSPKLGRKKT) are enriched in basic residues. A compositionally biased stretch (low complexity) spans 360-371 (PAPAKAAIIPAK). The span at 408–437 (EDSHETVSPRMNEDRADKSIEVSEAVAVEH) shows a compositional bias: basic and acidic residues. Phosphoserine is present on S415.

It belongs to the TPX2 family. In terms of tissue distribution, expressed in seedlings.

The protein resides in the cytoplasm. It is found in the cytoskeleton. In terms of biological role, microtubule-associated protein (MAP) that regulates the orientation of interphase cortical microtubules. This Arabidopsis thaliana (Mouse-ear cress) protein is Protein WVD2-like 5.